A 477-amino-acid polypeptide reads, in one-letter code: Pup--protein ligase (477 aa).

Residue glutamate 16 coordinates Mg(2+). Arginine 60 provides a ligand contact to ATP. Mg(2+) is bound at residue tyrosine 62. Catalysis depends on aspartate 64, which acts as the Proton acceptor. Position 70 (glutamate 70) interacts with Mg(2+). Residues threonine 73 and tryptophan 441 each coordinate ATP.

The protein belongs to the Pup ligase/Pup deamidase family. Pup-conjugating enzyme subfamily.

The enzyme catalyses ATP + [prokaryotic ubiquitin-like protein]-L-glutamate + [protein]-L-lysine = ADP + phosphate + N(6)-([prokaryotic ubiquitin-like protein]-gamma-L-glutamyl)-[protein]-L-lysine.. It participates in protein degradation; proteasomal Pup-dependent pathway. The protein operates within protein modification; protein pupylation. In terms of biological role, catalyzes the covalent attachment of the prokaryotic ubiquitin-like protein modifier Pup to the proteasomal substrate proteins, thereby targeting them for proteasomal degradation. This tagging system is termed pupylation. The ligation reaction involves the side-chain carboxylate of the C-terminal glutamate of Pup and the side-chain amino group of a substrate lysine. This chain is Pup--protein ligase, found in Corynebacterium kroppenstedtii (strain DSM 44385 / JCM 11950 / CIP 105744 / CCUG 35717).